The following is a 208-amino-acid chain: Large ribosomal subunit protein uL4 (208 aa).

The disordered stretch occupies residues 45–84; the sequence is RQGTHKVKNRSEVRGGGKKPYRQKGTGHARQGSSRSGLMS. Basic residues predominate over residues 60-71; it reads GGKKPYRQKGTG.

This sequence belongs to the universal ribosomal protein uL4 family. In terms of assembly, part of the 50S ribosomal subunit.

One of the primary rRNA binding proteins, this protein initially binds near the 5'-end of the 23S rRNA. It is important during the early stages of 50S assembly. It makes multiple contacts with different domains of the 23S rRNA in the assembled 50S subunit and ribosome. In terms of biological role, forms part of the polypeptide exit tunnel. This is Large ribosomal subunit protein uL4 from Prosthecochloris aestuarii (strain DSM 271 / SK 413).